Reading from the N-terminus, the 657-residue chain is Hemocyanin (657 aa).

Asn167 carries an N-linked (GlcNAc...) asparagine glycan. Cu cation contacts are provided by His194, His198, His224, His344, His348, and His384. Disulfide bonds link Cys483–Cys502 and Cys562–Cys609.

This sequence belongs to the tyrosinase family. Hemocyanin subfamily. As to quaternary structure, it consists of at least four very similar subunits. Hemolymph.

Its subcellular location is the secreted. It localises to the extracellular space. In terms of biological role, hemocyanins are copper-containing oxygen carriers occurring freely dissolved in the hemolymph of many mollusks and arthropods. This Palinurus vulgaris (European spiny lobster) protein is Hemocyanin.